The chain runs to 333 residues: Ornithine carbamoyltransferase (333 aa).

Carbamoyl phosphate contacts are provided by residues 56–59, Arg-107, and 134–137; these read STRT and HPTQ. L-ornithine-binding positions include Asn-167, Asp-231, and 235–236; that span reads SM. Residues 273 to 274 and Arg-318 each bind carbamoyl phosphate; that span reads CL.

This sequence belongs to the aspartate/ornithine carbamoyltransferase superfamily. OTCase family.

It is found in the cytoplasm. The enzyme catalyses carbamoyl phosphate + L-ornithine = L-citrulline + phosphate + H(+). Its pathway is amino-acid degradation; L-arginine degradation via ADI pathway; carbamoyl phosphate from L-arginine: step 2/2. Functionally, reversibly catalyzes the transfer of the carbamoyl group from carbamoyl phosphate (CP) to the N(epsilon) atom of ornithine (ORN) to produce L-citrulline. This chain is Ornithine carbamoyltransferase, found in Clostridium botulinum (strain Kyoto / Type A2).